The following is a 186-amino-acid chain: Small ribosomal subunit protein uS7 (186 aa).

This sequence belongs to the universal ribosomal protein uS7 family. As to quaternary structure, part of the 30S ribosomal subunit.

In terms of biological role, one of the primary rRNA binding proteins, it binds directly to 16S rRNA where it nucleates assembly of the head domain of the 30S subunit. Is located at the subunit interface close to the decoding center. The polypeptide is Small ribosomal subunit protein uS7 (Methanothermobacter thermautotrophicus (strain ATCC 29096 / DSM 1053 / JCM 10044 / NBRC 100330 / Delta H) (Methanobacterium thermoautotrophicum)).